We begin with the raw amino-acid sequence, 327 residues long: tRNA N6-adenosine threonylcarbamoyltransferase (327 aa).

Fe cation is bound by residues His-109 and His-113. Substrate contacts are provided by residues 132 to 136, Asp-165, Gly-178, Asp-182, and Asn-268; that span reads MVSGG. Asp-296 serves as a coordination point for Fe cation.

It belongs to the KAE1 / TsaD family. Forms a hexamer composed of two TsaB, TsaD and TsaE trimers. Fe(2+) is required as a cofactor.

The protein resides in the cytoplasm. It catalyses the reaction L-threonylcarbamoyladenylate + adenosine(37) in tRNA = N(6)-L-threonylcarbamoyladenosine(37) in tRNA + AMP + H(+). Functionally, required for the formation of a threonylcarbamoyl group on adenosine at position 37 (t(6)A37) in tRNAs that read codons beginning with adenine. Is involved in the transfer of the threonylcarbamoyl moiety of threonylcarbamoyl-AMP (TC-AMP) to the N6 group of A37, together with TsaE and TsaB. TsaD likely plays a direct catalytic role in this reaction. This Thermotoga maritima (strain ATCC 43589 / DSM 3109 / JCM 10099 / NBRC 100826 / MSB8) protein is tRNA N6-adenosine threonylcarbamoyltransferase.